The sequence spans 283 residues: Plasma membrane ascorbate-dependent reductase CYBRD1 (283 aa).

The Cytoplasmic portion of the chain corresponds to 1–5 (MEGYK). A helical transmembrane segment spans residues 6 to 30 (SFLAFLVSSLLLGFLGVIFTLVWVL). The region spanning 13–218 (SSLLLGFLGV…FGGLVVWMVT (206 aa)) is the Cytochrome b561 domain. Over 31-45 (HWREGLGWDGGAAEF) the chain is Extracellular. Residues 46–67 (NWHPVLVTSGFIFIQGIAIIVY) traverse the membrane as a helical segment. The heme b site is built by His48, Arg68, and Lys77. Over 68 to 76 (RLPWTWKCS) the chain is Cytoplasmic. L-ascorbate is bound by residues Lys77 and Lys81. Residues 77–103 (KLLMKFIHAGLHLTALIFTIVALVAVF) traverse the membrane as a helical segment. Heme b is bound at residue His84. Residues 104–116 (DFHNAKNIPNMYS) are Extracellular-facing. Residue His106 coordinates Fe(3+). Residues 113-116 (NMYS) and His118 each bind heme b. The helical transmembrane segment at 117-142 (LHSWIGLTVVILYALQLVLGVSIYLL) threads the bilayer. Topologically, residues 143-149 (PFASNTL) are cytoplasmic. Arg150 provides a ligand contact to L-ascorbate. The chain crosses the membrane as a helical span at residues 150–177 (RAALMPVHVYSGLFIFGTVIATALMGIT). Heme b is bound by residues His157 and Glu178. At 178–195 (EKLIFSLKEPPYSKLPPE) the chain is on the extracellular side. The chain crosses the membrane as a helical span at residues 196 to 220 (AIFVNTFGLLILVFGGLVVWMVTTP). The Cytoplasmic portion of the chain corresponds to 221 to 283 (AWKRPREQGM…LDEAGQRSTM (63 aa)). Lys223 provides a ligand contact to heme b. Residues 234 to 262 (SPTVSSPDETEEGSTITDCSNTEKSDVEL) form a disordered region. Positions 235 to 253 (PTVSSPDETEEGSTITDCS) are enriched in polar residues.

Homodimer. The cofactor is heme b.

The protein localises to the cell membrane. It localises to the apical cell membrane. It carries out the reaction Fe(3+)(out) + L-ascorbate(in) = monodehydro-L-ascorbate radical(in) + Fe(2+)(out) + H(+). The enzyme catalyses Cu(2+)(out) + L-ascorbate(in) = Cu(+)(out) + monodehydro-L-ascorbate radical(in) + H(+). The catalysed reaction is monodehydro-L-ascorbate radical(out) + L-ascorbate(in) = monodehydro-L-ascorbate radical(in) + L-ascorbate(out). In terms of biological role, plasma membrane reductase that uses cytoplasmic ascorbate as an electron donor to reduce extracellular Fe(3+) into Fe(2+). It is also able to reduce extracellular monodehydro-L-ascorbate and may be involved in extracellular ascorbate regeneration. May also function as a cupric transmembrane reductase. In Xenopus laevis (African clawed frog), this protein is Plasma membrane ascorbate-dependent reductase CYBRD1 (cybrd1).